Consider the following 401-residue polypeptide: Chaperone protein DnaJ (401 aa).

Positions Asp4 to Gly69 constitute a J domain. The segment at Gly156–Asp237 adopts a CR-type zinc-finger fold. Cys169, Cys172, Cys185, Cys188, Cys211, Cys214, Cys225, and Cys228 together coordinate Zn(2+). 4 CXXCXGXG motif repeats span residues Cys169–Gly176, Cys185–Gly192, Cys211–Gly218, and Cys225–Gly232. Residues Ala377–Ser401 form a disordered region. Over residues Asn385–Ser401 the composition is skewed to basic and acidic residues.

It belongs to the DnaJ family. In terms of assembly, homodimer. Zn(2+) is required as a cofactor.

Its subcellular location is the cytoplasm. In terms of biological role, participates actively in the response to hyperosmotic and heat shock by preventing the aggregation of stress-denatured proteins and by disaggregating proteins, also in an autonomous, DnaK-independent fashion. Unfolded proteins bind initially to DnaJ; upon interaction with the DnaJ-bound protein, DnaK hydrolyzes its bound ATP, resulting in the formation of a stable complex. GrpE releases ADP from DnaK; ATP binding to DnaK triggers the release of the substrate protein, thus completing the reaction cycle. Several rounds of ATP-dependent interactions between DnaJ, DnaK and GrpE are required for fully efficient folding. Also involved, together with DnaK and GrpE, in the DNA replication of plasmids through activation of initiation proteins. The chain is Chaperone protein DnaJ from Chlorobium limicola (strain DSM 245 / NBRC 103803 / 6330).